The primary structure comprises 149 residues: Calmodulin-like protein 3 (149 aa).

EF-hand domains are found at residues Glu-8 to Asn-43, Pro-44 to Asp-79, Asp-81 to Lys-116, and Leu-117 to Lys-149. Residues Asp-21, Asp-23, Asp-25, Cys-27, Glu-32, Asp-57, Asp-59, Asn-61, Thr-63, Glu-68, Asp-94, Asp-96, Asn-98, Glu-105, Asp-130, Asp-132, Asp-134, Gln-136, and Glu-141 each contribute to the Ca(2+) site.

This sequence belongs to the calmodulin family. In terms of assembly, interacts with MYO10, the interaction is calcium-dependent and essential for MYO10 function in filopodial extension. In terms of tissue distribution, expressed in normal mammary, prostate, cervical, and epidermal tissues. It is greatly reduced or undetectable in transformed cells.

Functionally, may function as a specific light chain of unconventional myosin-10 (MYO10), also enhances MYO10 translation, possibly by acting as a chaperone for the emerging MYO10 heavy chain protein. May compete with calmodulin by binding, with different affinities, to cellular substrates. The polypeptide is Calmodulin-like protein 3 (CALML3) (Homo sapiens (Human)).